Reading from the N-terminus, the 436-residue chain is ATP-dependent protease ATPase subunit HslU (436 aa).

Residues I18, 60–65, D249, E314, and R386 contribute to the ATP site; that span reads GVGKTE.

Belongs to the ClpX chaperone family. HslU subfamily. A double ring-shaped homohexamer of HslV is capped on each side by a ring-shaped HslU homohexamer. The assembly of the HslU/HslV complex is dependent on binding of ATP.

It localises to the cytoplasm. Functionally, ATPase subunit of a proteasome-like degradation complex; this subunit has chaperone activity. The binding of ATP and its subsequent hydrolysis by HslU are essential for unfolding of protein substrates subsequently hydrolyzed by HslV. HslU recognizes the N-terminal part of its protein substrates and unfolds these before they are guided to HslV for hydrolysis. The chain is ATP-dependent protease ATPase subunit HslU from Ruegeria sp. (strain TM1040) (Silicibacter sp.).